The chain runs to 276 residues: Undecaprenyl-diphosphatase (276 aa).

Transmembrane regions (helical) follow at residues 84–104 (YRLG…GLFF), 115–135 (LWVV…AEYV), 188–208 (FGFL…LPDA), 222–242 (QLLV…AWLL), and 250–270 (MYWF…LLAT).

This sequence belongs to the UppP family.

Its subcellular location is the cell membrane. It carries out the reaction di-trans,octa-cis-undecaprenyl diphosphate + H2O = di-trans,octa-cis-undecaprenyl phosphate + phosphate + H(+). In terms of biological role, catalyzes the dephosphorylation of undecaprenyl diphosphate (UPP). Confers resistance to bacitracin. The protein is Undecaprenyl-diphosphatase of Mycobacterium bovis (strain ATCC BAA-935 / AF2122/97).